The chain runs to 286 residues: NAD kinase (286 aa).

The Proton acceptor role is filled by aspartate 68. NAD(+) contacts are provided by residues 68–69 (DG), lysine 73, 142–143 (ND), arginine 153, aspartate 172, 183–188 (TGYSFS), and glutamine 242.

This sequence belongs to the NAD kinase family. Requires a divalent metal cation as cofactor.

The protein resides in the cytoplasm. It carries out the reaction NAD(+) + ATP = ADP + NADP(+) + H(+). Its function is as follows. Involved in the regulation of the intracellular balance of NAD and NADP, and is a key enzyme in the biosynthesis of NADP. Catalyzes specifically the phosphorylation on 2'-hydroxyl of the adenosine moiety of NAD to yield NADP. The sequence is that of NAD kinase from Natranaerobius thermophilus (strain ATCC BAA-1301 / DSM 18059 / JW/NM-WN-LF).